Consider the following 199-residue polypeptide: GTP cyclohydrolase-2 (199 aa).

49 to 53 contributes to the GTP binding site; it reads RIHSE. Zn(2+) contacts are provided by cysteine 54, cysteine 65, and cysteine 67. GTP is bound by residues glutamine 70, 92–94, and threonine 114; that span reads EGR. Aspartate 126 acts as the Proton acceptor in catalysis. The active-site Nucleophile is arginine 128. The GTP site is built by threonine 149 and lysine 154. The tract at residues 172–199 is disordered; the sequence is ETGRNPHNSHYLETKRGKLGHLLEGDSE.

This sequence belongs to the GTP cyclohydrolase II family. Zn(2+) serves as cofactor.

The enzyme catalyses GTP + 4 H2O = 2,5-diamino-6-hydroxy-4-(5-phosphoribosylamino)-pyrimidine + formate + 2 phosphate + 3 H(+). The protein operates within cofactor biosynthesis; riboflavin biosynthesis; 5-amino-6-(D-ribitylamino)uracil from GTP: step 1/4. Catalyzes the conversion of GTP to 2,5-diamino-6-ribosylamino-4(3H)-pyrimidinone 5'-phosphate (DARP), formate and pyrophosphate. The chain is GTP cyclohydrolase-2 from Teredinibacter turnerae (strain ATCC 39867 / T7901).